The sequence spans 437 residues: Chromosomal replication initiator protein DnaA (437 aa).

Residues Met1–Glu74 are domain I, interacts with DnaA modulators. The domain II stretch occupies residues Glu74–Phe98. The segment at Gln99 to Lys315 is domain III, AAA+ region. ATP is bound by residues Gly142, Gly144, Lys145, and Thr146. Positions Lys316–Gln437 are domain IV, binds dsDNA.

The protein belongs to the DnaA family. Oligomerizes as a right-handed, spiral filament on DNA at oriC.

It is found in the cytoplasm. Its function is as follows. Plays an essential role in the initiation and regulation of chromosomal replication. ATP-DnaA binds to the origin of replication (oriC) to initiate formation of the DNA replication initiation complex once per cell cycle. Binds the DnaA box (a 9 base pair repeat at the origin) and separates the double-stranded (ds)DNA. Forms a right-handed helical filament on oriC DNA; dsDNA binds to the exterior of the filament while single-stranded (ss)DNA is stabiized in the filament's interior. The ATP-DnaA-oriC complex binds and stabilizes one strand of the AT-rich DNA unwinding element (DUE), permitting loading of DNA polymerase. After initiation quickly degrades to an ADP-DnaA complex that is not apt for DNA replication. Binds acidic phospholipids. The polypeptide is Chromosomal replication initiator protein DnaA (Leptospira borgpetersenii serovar Hardjo-bovis (strain JB197)).